Consider the following 205-residue polypeptide: Isochorismatase domain-containing protein 2 (205 aa).

Belongs to the isochorismatase family. Interacts with CDKN2A.

It localises to the cytoplasm. The protein localises to the nucleus. In Macaca fascicularis (Crab-eating macaque), this protein is Isochorismatase domain-containing protein 2 (ISOC2).